A 175-amino-acid chain; its full sequence is uncharacterized protein (175 aa).

2 disordered regions span residues 1–32 (MSHK…KLRH) and 156–175 (KQKQ…KYRQ). Residues 14 to 24 (LLSSSSPVAKK) show a composition bias toward low complexity.

This is an uncharacterized protein from Mycoplasma pneumoniae (strain ATCC 29342 / M129 / Subtype 1) (Mycoplasmoides pneumoniae).